Here is a 32-residue protein sequence, read N- to C-terminus: Dermaseptin-DA4 (32 aa).

As to expression, expressed by the skin glands.

It is found in the secreted. The protein resides in the target cell membrane. Its function is as follows. Antimicrobial peptide with activity against Gram-negative bacteria, but not against Gram-positive bacteria. Active against E.coli (MIC=5 uM), and P.aeruginosa (MIC=40 uM). Acts by disrupting cell membranes. Is able to depolarize membranes of Gram-positive and Gram-negative bacteria. Also acts as a potent chemoattractant for human leukocytes and activates them mainly through a GPCR, possibly FPRL1 coupled to the ERK1/2 MAPK pathway. Is unstructured in water but become helical upon binding to anionic lipids. In contrast to most dermaseptins, is not structured in the presence of zwitterionic lipids. Does not show hemolytic activity. The chain is Dermaseptin-DA4 from Agalychnis dacnicolor (Giant Mexican leaf frog).